Reading from the N-terminus, the 516-residue chain is Melianol synthase CYP71BQ17 (516 aa).

A helical membrane pass occupies residues 14-34 (MPHLPSLPVSLSFLLFFLMLV). C454 contacts heme.

It belongs to the cytochrome P450 family. Heme serves as cofactor. In terms of tissue distribution, mainly expressed in roots and, to a lesser extent, in stems and old leaves.

It localises to the membrane. It carries out the reaction dihydroniloticin + 2 reduced [NADPH--hemoprotein reductase] + 2 O2 = melianol + 2 oxidized [NADPH--hemoprotein reductase] + 3 H2O + 2 H(+). The protein operates within secondary metabolite biosynthesis; terpenoid biosynthesis. Monooxygenase involved in the biosynthesis of quassinoids triterpene natural products such as ailanthone, chaparrinone, glaucarubinone and amarolide, allelopathic degraded triterpene lactones inhibiting the growth of other plants, and possessing antimalarial, antifeedant, insecticidal, anti-inflammatory and anticancer activities. Catalyzes the conversion of dihydroniloticin to the protolimonoid melianol. The protein is Melianol synthase CYP71BQ17 of Ailanthus altissima (Tree-of-heaven).